The sequence spans 103 residues: Small ribosomal subunit protein uS10 (103 aa).

Belongs to the universal ribosomal protein uS10 family. As to quaternary structure, part of the 30S ribosomal subunit.

Functionally, involved in the binding of tRNA to the ribosomes. The polypeptide is Small ribosomal subunit protein uS10 (Desulfatibacillum aliphaticivorans).